A 260-amino-acid chain; its full sequence is Probable carbohydrate esterase At4g34215 (260 aa).

Positions 1–22 (MEGGSITPGEDKPEIQSPIPPN) are disordered. Active-site residues include serine 31, aspartate 235, and histidine 238.

This sequence belongs to the carbohydrate esterase 6 family.

The protein is Probable carbohydrate esterase At4g34215 of Arabidopsis thaliana (Mouse-ear cress).